The following is a 280-amino-acid chain: Release factor glutamine methyltransferase (280 aa).

Residues 120 to 124, aspartate 143, and asparagine 186 each bind S-adenosyl-L-methionine; that span reads GTGSG. Residue 186-189 participates in substrate binding; sequence NPPY.

The protein belongs to the protein N5-glutamine methyltransferase family. PrmC subfamily.

The catalysed reaction is L-glutaminyl-[peptide chain release factor] + S-adenosyl-L-methionine = N(5)-methyl-L-glutaminyl-[peptide chain release factor] + S-adenosyl-L-homocysteine + H(+). Methylates the class 1 translation termination release factors RF1/PrfA and RF2/PrfB on the glutamine residue of the universally conserved GGQ motif. This Koribacter versatilis (strain Ellin345) protein is Release factor glutamine methyltransferase.